Consider the following 315-residue polypeptide: Olfactory receptor 2V1 (315 aa).

Over Met1–Ala31 the chain is Extracellular. Asn6 carries an N-linked (GlcNAc...) asparagine glycan. A helical transmembrane segment spans residues Val32 to Leu52. The Cytoplasmic segment spans residues Asp53–Thr58. A helical transmembrane segment spans residues Pro59–Val79. Over Pro80 to Gly99 the chain is Extracellular. Cys98 and Cys180 are joined by a disulfide. A helical membrane pass occupies residues Ile100–Ala120. Over Tyr121–Ser149 the chain is Cytoplasmic. Residues Trp150–Cys170 traverse the membrane as a helical segment. The Extracellular segment spans residues Gly171–Thr198. A helical membrane pass occupies residues Leu199–Tyr219. Topologically, residues Ala220 to Ala238 are cytoplasmic. Residues Leu239–Met259 form a helical membrane-spanning segment. The Extracellular portion of the chain corresponds to Tyr260–Asp272. A helical transmembrane segment spans residues Lys273–Leu293. Residues Arg294 to His315 lie on the Cytoplasmic side of the membrane.

This sequence belongs to the G-protein coupled receptor 1 family.

It is found in the cell membrane. Odorant receptor. This Homo sapiens (Human) protein is Olfactory receptor 2V1 (OR2V1).